The following is a 227-amino-acid chain: Mediator of RNA polymerase II transcription subunit 18 (227 aa).

This sequence belongs to the Mediator complex subunit 18 family. Component of the Mediator complex.

Its subcellular location is the nucleus. Functionally, component of the Mediator complex, a coactivator involved in the regulated transcription of nearly all RNA polymerase II-dependent genes. Mediator functions as a bridge to convey information from gene-specific regulatory proteins to the basal RNA polymerase II transcription machinery. Mediator is recruited to promoters by direct interactions with regulatory proteins and serves as a scaffold for the assembly of a functional preinitiation complex with RNA polymerase II and the general transcription factors. The polypeptide is Mediator of RNA polymerase II transcription subunit 18 (mdt-18) (Caenorhabditis briggsae).